A 329-amino-acid chain; its full sequence is Cathepsin K (329 aa).

The signal sequence occupies residues 1-15 (MWVFKFLLLPMVSFA). Residues 16 to 114 (LSPEEMLDTQ…TLYTPEWEGR (99 aa)) constitute a propeptide, activation peptide. Residue asparagine 103 is glycosylated (N-linked (GlcNAc...) asparagine). 2 cysteine pairs are disulfide-bonded: cysteine 136–cysteine 177 and cysteine 170–cysteine 210. Cysteine 139 is a catalytic residue. Asparagine 213 is a glycosylation site (N-linked (GlcNAc...) asparagine). Residues cysteine 269 and cysteine 318 are joined by a disulfide bond. Catalysis depends on residues histidine 276 and asparagine 296.

It belongs to the peptidase C1 family. As to expression, predominantly expressed in bones. Expressed in thyroid epithelial cells.

It localises to the lysosome. The protein resides in the secreted. Its subcellular location is the apical cell membrane. The enzyme catalyses Broad proteolytic activity. With small-molecule substrates and inhibitors, the major determinant of specificity is P2, which is preferably Leu, Met &gt; Phe, and not Arg.. In terms of biological role, thiol protease involved in osteoclastic bone resorption. Displays potent endoprotease activity against fibrinogen at acid pH. May play an important role in extracellular matrix degradation. Involved in the release of thyroid hormone thyroxine (T4) by limited proteolysis of TG/thyroglobulin in the thyroid follicle lumen. This is Cathepsin K (Ctsk) from Mus musculus (Mouse).